The sequence spans 205 residues: Urease accessory protein UreG (205 aa).

Glycine 14–threonine 21 lines the GTP pocket.

The protein belongs to the SIMIBI class G3E GTPase family. UreG subfamily. As to quaternary structure, homodimer. UreD, UreF and UreG form a complex that acts as a GTP-hydrolysis-dependent molecular chaperone, activating the urease apoprotein by helping to assemble the nickel containing metallocenter of UreC. The UreE protein probably delivers the nickel.

The protein localises to the cytoplasm. Its function is as follows. Facilitates the functional incorporation of the urease nickel metallocenter. This process requires GTP hydrolysis, probably effectuated by UreG. The sequence is that of Urease accessory protein UreG from Enterobacter sp. (strain 638).